We begin with the raw amino-acid sequence, 202 residues long: Glycerol-3-phosphate acyltransferase (202 aa).

The next 4 helical transmembrane spans lie at 2–22, 85–105, 119–139, and 158–178; these read ANLL…AVVV, LAMV…HRFA, AINP…AFFF, and VLME…ILLI.

It belongs to the PlsY family. In terms of assembly, probably interacts with PlsX.

It is found in the cell inner membrane. The catalysed reaction is an acyl phosphate + sn-glycerol 3-phosphate = a 1-acyl-sn-glycero-3-phosphate + phosphate. Its pathway is lipid metabolism; phospholipid metabolism. Functionally, catalyzes the transfer of an acyl group from acyl-phosphate (acyl-PO(4)) to glycerol-3-phosphate (G3P) to form lysophosphatidic acid (LPA). This enzyme utilizes acyl-phosphate as fatty acyl donor, but not acyl-CoA or acyl-ACP. The chain is Glycerol-3-phosphate acyltransferase from Cupriavidus pinatubonensis (strain JMP 134 / LMG 1197) (Cupriavidus necator (strain JMP 134)).